The primary structure comprises 68 residues: Arabinogalactan peptide 1 (68 aa).

The N-terminal stretch at 1–30 (MAGQLKSKIVAVAVAAVVVVASSLVGTASA) is a signal peptide. S40 carries the GPI-anchor amidated serine lipid modification. Positions 41–68 (GATATAAAAPAFAAVSVAAAALGGYLFC) are cleaved as a propeptide — removed in mature form.

Belongs to the AG-peptide AGP family. O-glycosylated on hydroxyprolines; noncontiguous hydroxylproline residues are glycosylated with arabinogalactan. In terms of tissue distribution, expressed in roots, stems, flowers and seeds.

The protein localises to the vacuole. The protein resides in the aleurone grain membrane. Functionally, proteoglycan that seems to be implicated in diverse developmental roles such as differentiation, cell-cell recognition, embryogenesis and programmed cell death. This Oryza sativa subsp. japonica (Rice) protein is Arabinogalactan peptide 1 (AGPEP1).